We begin with the raw amino-acid sequence, 523 residues long: Acetyl-CoA hydrolase (523 aa).

277-281 (GIGNI) is a CoA binding site. The active-site 5-glutamyl coenzyme A thioester intermediate is the glutamate 302. 2 residues coordinate CoA: asparagine 392 and glycine 396.

It belongs to the acetyl-CoA hydrolase/transferase family.

It localises to the cytoplasm. It catalyses the reaction acetyl-CoA + H2O = acetate + CoA + H(+). Functionally, presumably involved in regulating the intracellular acetyl-CoA pool for fatty acid and cholesterol synthesis and fatty acid oxidation. This chain is Acetyl-CoA hydrolase (ACH1), found in Kluyveromyces lactis (strain ATCC 8585 / CBS 2359 / DSM 70799 / NBRC 1267 / NRRL Y-1140 / WM37) (Yeast).